We begin with the raw amino-acid sequence, 1368 residues long: DNA-directed RNA polymerase subunit beta (1368 aa).

It belongs to the RNA polymerase beta chain family. As to quaternary structure, the RNAP catalytic core consists of 2 alpha, 1 beta, 1 beta' and 1 omega subunit. When a sigma factor is associated with the core the holoenzyme is formed, which can initiate transcription.

The enzyme catalyses RNA(n) + a ribonucleoside 5'-triphosphate = RNA(n+1) + diphosphate. DNA-dependent RNA polymerase catalyzes the transcription of DNA into RNA using the four ribonucleoside triphosphates as substrates. The sequence is that of DNA-directed RNA polymerase subunit beta from Burkholderia ambifaria (strain ATCC BAA-244 / DSM 16087 / CCUG 44356 / LMG 19182 / AMMD) (Burkholderia cepacia (strain AMMD)).